The sequence spans 31 residues: Photosystem II reaction center protein T (31 aa).

The chain crosses the membrane as a helical span at residues 3–23 (ALVYTFLLVTTLGILFFSIIF).

The protein belongs to the PsbT family. In terms of assembly, PSII is composed of 1 copy each of membrane proteins PsbA, PsbB, PsbC, PsbD, PsbE, PsbF, PsbH, PsbI, PsbJ, PsbK, PsbL, PsbM, PsbT, PsbX, PsbY, PsbZ, Psb30/Ycf12, at least 3 peripheral proteins of the oxygen-evolving complex and a large number of cofactors. It forms dimeric complexes.

Its subcellular location is the plastid. The protein localises to the cyanelle thylakoid membrane. Its function is as follows. Found at the monomer-monomer interface of the photosystem II (PS II) dimer, plays a role in assembly and dimerization of PSII. PSII is a light-driven water plastoquinone oxidoreductase, using light energy to abstract electrons from H(2)O, generating a proton gradient subsequently used for ATP formation. The protein is Photosystem II reaction center protein T of Cyanophora paradoxa.